The chain runs to 410 residues: Gamma-glutamyl phosphate reductase (410 aa).

It belongs to the gamma-glutamyl phosphate reductase family.

The protein localises to the cytoplasm. The catalysed reaction is L-glutamate 5-semialdehyde + phosphate + NADP(+) = L-glutamyl 5-phosphate + NADPH + H(+). It functions in the pathway amino-acid biosynthesis; L-proline biosynthesis; L-glutamate 5-semialdehyde from L-glutamate: step 2/2. In terms of biological role, catalyzes the NADPH-dependent reduction of L-glutamate 5-phosphate into L-glutamate 5-semialdehyde and phosphate. The product spontaneously undergoes cyclization to form 1-pyrroline-5-carboxylate. This Sulfurovum sp. (strain NBC37-1) protein is Gamma-glutamyl phosphate reductase.